The primary structure comprises 242 residues: Phosphoribosyl isomerase A (242 aa).

The active-site Proton acceptor is the Asp12. The active-site Proton donor is Asp131.

The protein belongs to the HisA/HisF family.

It is found in the cytoplasm. It carries out the reaction 1-(5-phospho-beta-D-ribosyl)-5-[(5-phospho-beta-D-ribosylamino)methylideneamino]imidazole-4-carboxamide = 5-[(5-phospho-1-deoxy-D-ribulos-1-ylimino)methylamino]-1-(5-phospho-beta-D-ribosyl)imidazole-4-carboxamide. The enzyme catalyses N-(5-phospho-beta-D-ribosyl)anthranilate = 1-(2-carboxyphenylamino)-1-deoxy-D-ribulose 5-phosphate. The protein operates within amino-acid biosynthesis; L-histidine biosynthesis; L-histidine from 5-phospho-alpha-D-ribose 1-diphosphate: step 4/9. It participates in amino-acid biosynthesis; L-tryptophan biosynthesis; L-tryptophan from chorismate: step 3/5. In terms of biological role, involved in both the histidine and tryptophan biosynthetic pathways. This is Phosphoribosyl isomerase A from Streptomyces avermitilis (strain ATCC 31267 / DSM 46492 / JCM 5070 / NBRC 14893 / NCIMB 12804 / NRRL 8165 / MA-4680).